Here is a 128-residue protein sequence, read N- to C-terminus: Transcription antitermination protein NusB (128 aa).

This sequence belongs to the NusB family.

Its function is as follows. Involved in transcription antitermination. Required for transcription of ribosomal RNA (rRNA) genes. Binds specifically to the boxA antiterminator sequence of the ribosomal RNA (rrn) operons. In Staphylococcus carnosus (strain TM300), this protein is Transcription antitermination protein NusB.